A 310-amino-acid chain; its full sequence is Methionyl-tRNA formyltransferase (310 aa).

S111 to P114 contributes to the (6S)-5,6,7,8-tetrahydrofolate binding site.

The protein belongs to the Fmt family.

The enzyme catalyses L-methionyl-tRNA(fMet) + (6R)-10-formyltetrahydrofolate = N-formyl-L-methionyl-tRNA(fMet) + (6S)-5,6,7,8-tetrahydrofolate + H(+). Functionally, attaches a formyl group to the free amino group of methionyl-tRNA(fMet). The formyl group appears to play a dual role in the initiator identity of N-formylmethionyl-tRNA by promoting its recognition by IF2 and preventing the misappropriation of this tRNA by the elongation apparatus. The polypeptide is Methionyl-tRNA formyltransferase (Finegoldia magna (strain ATCC 29328 / DSM 20472 / WAL 2508) (Peptostreptococcus magnus)).